Consider the following 310-residue polypeptide: Ribosomal RNA small subunit methyltransferase H (310 aa).

Residues 32–34 (AGH), D51, F78, D99, and Q106 each bind S-adenosyl-L-methionine.

This sequence belongs to the methyltransferase superfamily. RsmH family.

Its subcellular location is the cytoplasm. It catalyses the reaction cytidine(1402) in 16S rRNA + S-adenosyl-L-methionine = N(4)-methylcytidine(1402) in 16S rRNA + S-adenosyl-L-homocysteine + H(+). In terms of biological role, specifically methylates the N4 position of cytidine in position 1402 (C1402) of 16S rRNA. The sequence is that of Ribosomal RNA small subunit methyltransferase H from Macrococcus caseolyticus (strain JCSC5402) (Macrococcoides caseolyticum).